We begin with the raw amino-acid sequence, 735 residues long: Receptor-type guanylate cyclase gcy-27 (735 aa).

A glycan (N-linked (GlcNAc...) asparagine) is linked at asparagine 11. A helical membrane pass occupies residues phenylalanine 28–asparagine 48. The Protein kinase domain occupies alanine 188–isoleucine 465. The 131-residue stretch at threonine 538–glutamine 668 folds into the Guanylate cyclase domain.

This sequence belongs to the adenylyl cyclase class-4/guanylyl cyclase family. As to expression, expressed bilaterally in ASK, ASI and ASJ sensory neurons.

It is found in the cell membrane. The enzyme catalyses GTP = 3',5'-cyclic GMP + diphosphate. In terms of biological role, guanylate cyclase involved in the production of the second messenger cGMP. May be involved in sensitivity to quinine by regulating egl-4 activity through the production of cGMP. Promotes the calcium flux to the cytoplasm in ASJ sensory neurons upon removal of a nitric oxide (NO) stimulus and is thereby involved in the behavioral avoidance response to NO-producing organisms like P.aeruginosa. This is Receptor-type guanylate cyclase gcy-27 from Caenorhabditis elegans.